Consider the following 55-residue polypeptide: Large ribosomal subunit protein bL33 (55 aa).

The protein belongs to the bacterial ribosomal protein bL33 family. Part of the 50S ribosomal subunit. Contacts protein L35.

Functionally, binds the 23S rRNA and the E site tRNA. This is Large ribosomal subunit protein bL33 (rpmG) from Deinococcus radiodurans (strain ATCC 13939 / DSM 20539 / JCM 16871 / CCUG 27074 / LMG 4051 / NBRC 15346 / NCIMB 9279 / VKM B-1422 / R1).